A 576-amino-acid chain; its full sequence is Urease subunit alpha (576 aa).

A Urease domain is found at 132–576; that stretch reads GGVDTHIHFI…LPMAQRYFLF (445 aa). Residues H137, H139, and K220 each coordinate Ni(2+). K220 carries the N6-carboxylysine modification. Position 222 (H222) interacts with substrate. The Ni(2+) site is built by H249 and H275. H323 serves as the catalytic Proton donor. Position 363 (D363) interacts with Ni(2+).

Belongs to the metallo-dependent hydrolases superfamily. Urease alpha subunit family. As to quaternary structure, heterotrimer of UreA (gamma), UreB (beta) and UreC (alpha) subunits. Three heterotrimers associate to form the active enzyme. Ni cation is required as a cofactor. Carboxylation allows a single lysine to coordinate two nickel ions.

It is found in the cytoplasm. The enzyme catalyses urea + 2 H2O + H(+) = hydrogencarbonate + 2 NH4(+). The protein operates within nitrogen metabolism; urea degradation; CO(2) and NH(3) from urea (urease route): step 1/1. This Arthrobacter sp. (strain FB24) protein is Urease subunit alpha.